A 193-amino-acid polypeptide reads, in one-letter code: Inner membrane protein p54 (193 aa).

A helical membrane pass occupies residues 32–52; that stretch reads YTILIAIVVLVIIIIVLIYLF. Residues 84–126 form a disordered region; it reads PQPGTSKPAGATTASVGKPVTGRPATNRPVTDRPATNNPVTDR. 4 tandem repeats follow at residues 135–138, 139–142, 143–146, and 147–150. The interval 135 to 150 is 4 X 4 AA tandem repeats of A-A-A-S; sequence AAASAAASAAASAAAS. The tract at residues 159–171 is interaction with host DYNLL1; that stretch reads YTTVTTQNTASQT.

It belongs to the asfivirus envelope protein p54 family. As to quaternary structure, interacts with the host light chain cytoplasmic dynein DYNLL1; this interaction is critical for intracellular microtubule-dependent virus transport toward viral factories.

The protein resides in the virion membrane. It localises to the host cytoplasm. It is found in the host cytoskeleton. The protein localises to the host endoplasmic reticulum membrane. In terms of biological role, inner envelope protein involved, through its interaction with host dynein, in the intracellular microtubule-dependent transport of viral capsid toward viral factories. Seems to induce caspase-3 activation and apoptosis. Plays a role in virion morphogenesis by recruiting and transforming the host ER membranes into the precursors of the viral envelope. Involved in virus attachment to the host cell. The polypeptide is Inner membrane protein p54 (Ornithodoros (relapsing fever ticks)).